The sequence spans 151 residues: Transcriptional repressor NrdR (151 aa).

A zinc finger spans residues 3–34 (CPFCSSDNTRVIDSRPADDNSSIRRRRLCDDC). Residues 49–139 (LIVIKKDNNR…VYREFKDVNT (91 aa)) form the ATP-cone domain.

The protein belongs to the NrdR family. Zn(2+) serves as cofactor.

Functionally, negatively regulates transcription of bacterial ribonucleotide reductase nrd genes and operons by binding to NrdR-boxes. The polypeptide is Transcriptional repressor NrdR (Agathobacter rectalis (strain ATCC 33656 / DSM 3377 / JCM 17463 / KCTC 5835 / VPI 0990) (Eubacterium rectale)).